The chain runs to 612 residues: uncharacterized protein (612 aa).

6 helical membrane passes run 13–33 (IPLT…EWLP), 38–58 (AILV…EGIA), 67–87 (TIMA…IQII), 107–127 (GFIV…AIFL), 144–164 (LLIP…LGTS), and 189–209 (LGLL…PILL). 2 RCK C-terminal domains span residues 218-302 (GNVA…ERGI) and 316-403 (NNAG…LLVL). 6 helical membrane-spanning segments follow: residues 419–439 (AIAI…PISV), 459–479 (IYGA…PLGT), 501–521 (LSGY…TEIL), 525–545 (ATVV…GLNP), 546–566 (LAFM…PIGY), and 586–606 (IGAP…MLIY).

This sequence belongs to the SLC13A/DASS transporter (TC 2.A.47) family. NADC subfamily.

The protein resides in the cell membrane. This is an uncharacterized protein from Synechocystis sp. (strain ATCC 27184 / PCC 6803 / Kazusa).